Consider the following 84-residue polypeptide: Conophysin-R (84 aa).

Cystine bridges form between cysteine 6–cysteine 46, cysteine 9–cysteine 20, cysteine 14–cysteine 36, cysteine 21–cysteine 26, cysteine 53–cysteine 71, cysteine 65–cysteine 83, and cysteine 72–cysteine 77.

In terms of tissue distribution, expressed by the venom duct.

It is found in the secreted. Its function is as follows. Targets vasopressin-oxytocin related receptors. No effect observed when injected into goldfish or into mice. In Conus radiatus (Rayed cone), this protein is Conophysin-R.